Consider the following 236-residue polypeptide: UPF0257 lipoprotein YnfC (236 aa).

The signal sequence occupies residues 1–16 (MKYKLLPCLLAILLTG). Cys-17 is lipidated: N-palmitoyl cysteine. Residue Cys-17 is the site of S-diacylglycerol cysteine attachment.

It belongs to the UPF0257 family.

The protein resides in the cell membrane. This chain is UPF0257 lipoprotein YnfC, found in Escherichia coli O45:K1 (strain S88 / ExPEC).